Consider the following 304-residue polypeptide: Acetyl-coenzyme A carboxylase carboxyl transferase subunit beta (304 aa).

The region spanning 23 to 292 is the CoA carboxyltransferase N-terminal domain; it reads VWTKCDSCGQ…PNPEAPREGV (270 aa). The Zn(2+) site is built by cysteine 27, cysteine 30, cysteine 46, and cysteine 49. A C4-type zinc finger spans residues 27-49; that stretch reads CDSCGQVLYRAELERNLEVCPKC. A disordered region spans residues 284–304; that stretch reads NPEAPREGVVVPPVPDQEPEA. Positions 295-304 are enriched in pro residues; the sequence is PPVPDQEPEA.

The protein belongs to the AccD/PCCB family. Acetyl-CoA carboxylase is a heterohexamer composed of biotin carboxyl carrier protein (AccB), biotin carboxylase (AccC) and two subunits each of ACCase subunit alpha (AccA) and ACCase subunit beta (AccD). The cofactor is Zn(2+).

It localises to the cytoplasm. It carries out the reaction N(6)-carboxybiotinyl-L-lysyl-[protein] + acetyl-CoA = N(6)-biotinyl-L-lysyl-[protein] + malonyl-CoA. It participates in lipid metabolism; malonyl-CoA biosynthesis; malonyl-CoA from acetyl-CoA: step 1/1. Its function is as follows. Component of the acetyl coenzyme A carboxylase (ACC) complex. Biotin carboxylase (BC) catalyzes the carboxylation of biotin on its carrier protein (BCCP) and then the CO(2) group is transferred by the transcarboxylase to acetyl-CoA to form malonyl-CoA. This is Acetyl-coenzyme A carboxylase carboxyl transferase subunit beta from Shigella flexneri serotype 5b (strain 8401).